Reading from the N-terminus, the 135-residue chain is UPF0201 protein TON_1346 (135 aa).

Belongs to the UPF0201 family.

The polypeptide is UPF0201 protein TON_1346 (Thermococcus onnurineus (strain NA1)).